The following is a 392-amino-acid chain: 8-amino-7-oxononanoate synthase (392 aa).

Arg19 serves as a coordination point for substrate. A pyridoxal 5'-phosphate-binding site is contributed by 106–107 (GY). Residue His131 participates in substrate binding. Pyridoxal 5'-phosphate-binding residues include Ser176, His204, and Thr233. Residue Lys236 is modified to N6-(pyridoxal phosphate)lysine. Residue Thr350 participates in substrate binding.

The protein belongs to the class-II pyridoxal-phosphate-dependent aminotransferase family. BioF subfamily. In terms of assembly, homodimer. Requires pyridoxal 5'-phosphate as cofactor.

The catalysed reaction is 6-carboxyhexanoyl-[ACP] + L-alanine + H(+) = (8S)-8-amino-7-oxononanoate + holo-[ACP] + CO2. The protein operates within cofactor biosynthesis; biotin biosynthesis. Catalyzes the decarboxylative condensation of pimeloyl-[acyl-carrier protein] and L-alanine to produce 8-amino-7-oxononanoate (AON), [acyl-carrier protein], and carbon dioxide. In Pseudomonas fluorescens (strain ATCC BAA-477 / NRRL B-23932 / Pf-5), this protein is 8-amino-7-oxononanoate synthase.